The following is a 473-amino-acid chain: Siroheme synthase 1 (473 aa).

The precorrin-2 dehydrogenase /sirohydrochlorin ferrochelatase stretch occupies residues 1–204; sequence MDYFPIFCQL…NDHVQADQHV (204 aa). Residues 22 to 23 and 43 to 44 contribute to the NAD(+) site; these read EI and CE. Serine 128 carries the phosphoserine modification. Residues 216-473 form a uroporphyrinogen-III C-methyltransferase region; that stretch reads GEVVLVGAGP…KVTECVAHVG (258 aa). Proline 225 provides a ligand contact to S-adenosyl-L-methionine. Catalysis depends on aspartate 248, which acts as the Proton acceptor. Lysine 270 functions as the Proton donor in the catalytic mechanism. Residues 301–303, isoleucine 306, 331–332, methionine 382, and glycine 411 contribute to the S-adenosyl-L-methionine site; these read GGD and TA.

It in the N-terminal section; belongs to the precorrin-2 dehydrogenase / sirohydrochlorin ferrochelatase family. In the C-terminal section; belongs to the precorrin methyltransferase family.

The enzyme catalyses uroporphyrinogen III + 2 S-adenosyl-L-methionine = precorrin-2 + 2 S-adenosyl-L-homocysteine + H(+). The catalysed reaction is precorrin-2 + NAD(+) = sirohydrochlorin + NADH + 2 H(+). It catalyses the reaction siroheme + 2 H(+) = sirohydrochlorin + Fe(2+). The protein operates within cofactor biosynthesis; adenosylcobalamin biosynthesis; precorrin-2 from uroporphyrinogen III: step 1/1. It functions in the pathway cofactor biosynthesis; adenosylcobalamin biosynthesis; sirohydrochlorin from precorrin-2: step 1/1. It participates in porphyrin-containing compound metabolism; siroheme biosynthesis; precorrin-2 from uroporphyrinogen III: step 1/1. Its pathway is porphyrin-containing compound metabolism; siroheme biosynthesis; siroheme from sirohydrochlorin: step 1/1. The protein operates within porphyrin-containing compound metabolism; siroheme biosynthesis; sirohydrochlorin from precorrin-2: step 1/1. Its function is as follows. Multifunctional enzyme that catalyzes the SAM-dependent methylations of uroporphyrinogen III at position C-2 and C-7 to form precorrin-2 via precorrin-1. Then it catalyzes the NAD-dependent ring dehydrogenation of precorrin-2 to yield sirohydrochlorin. Finally, it catalyzes the ferrochelation of sirohydrochlorin to yield siroheme. In Yersinia pestis (strain Pestoides F), this protein is Siroheme synthase 1.